A 436-amino-acid chain; its full sequence is NADH-quinone oxidoreductase subunit D 1 (436 aa).

It belongs to the complex I 49 kDa subunit family. NDH-1 is composed of 14 different subunits. Subunits NuoB, C, D, E, F, and G constitute the peripheral sector of the complex.

It is found in the cell inner membrane. It carries out the reaction a quinone + NADH + 5 H(+)(in) = a quinol + NAD(+) + 4 H(+)(out). Functionally, NDH-1 shuttles electrons from NADH, via FMN and iron-sulfur (Fe-S) centers, to quinones in the respiratory chain. The immediate electron acceptor for the enzyme in this species is believed to be ubiquinone. Couples the redox reaction to proton translocation (for every two electrons transferred, four hydrogen ions are translocated across the cytoplasmic membrane), and thus conserves the redox energy in a proton gradient. This is NADH-quinone oxidoreductase subunit D 1 from Stenotrophomonas maltophilia (strain R551-3).